Reading from the N-terminus, the 649-residue chain is Flavin-dependent oxygenase ucdD (649 aa).

Positions 92, 185, 344, 370, and 386 each coordinate FAD.

It belongs to the PheA/TfdB FAD monooxygenase family. In terms of assembly, homodimer. FAD serves as cofactor.

Its pathway is secondary metabolite biosynthesis. Nonribosomal peptide synthetase that mediates the biosynthesis of usterphenyllins and uscandidusins, p-terphenyl derivatives. Within the pathway, ucdD catalyzes the formation of 3,15-dihydroxyterphenyllin via dihydroxylation at C-3 of ring A and C-15 of ring C of the terphenyllin intermediate. The pathway begin with the biosynthesis of 4-hydroxyphenylpyruvate (HPPA) from L-tyrosine, possibly by the aminotransferase ucdG. The nonribosomal peptide synthetase ucdA then condenses two HPPA units to produce atromentin. The key step in this pathway is the reduction and dehydration of atromentin to form a terphenyl triol intermediate, performed by the NAD-dependent dehydrogenase ucdB. Further O-methylation by the methyltransferase ucdC forms terphenyllin carrying two methoxy moieties at C-9 and C-12, and subsequent dihydroxylation at C-3 of ring A and C-15 of ring C by the flavin-dependent oxygenase ucdD leads to 3,15-dihydroxyterphenyllin. Prenylation by ucdE at position C-5 of ring A forms usterphenyllin B, and is followed by a second prenylation at position C-14 of ring C to form usterphenyllin A. The following furan ring formation that leads to uscandidusins A and B was proven to be an unexpected spontaneous non-enzymatic reaction. The polypeptide is Flavin-dependent oxygenase ucdD (Aspergillus ustus).